The primary structure comprises 275 residues: Formamidopyrimidine-DNA glycosylase (275 aa).

Proline 2 (schiff-base intermediate with DNA) is an active-site residue. Catalysis depends on glutamate 3, which acts as the Proton donor. The active-site Proton donor; for beta-elimination activity is lysine 58. Positions 91, 109, and 154 each coordinate DNA. Residues 240-274 (AVYERAGLPCRVCGAPIRRLVQGQRATYFCPSCQK) form an FPG-type zinc finger. Catalysis depends on arginine 264, which acts as the Proton donor; for delta-elimination activity.

It belongs to the FPG family. Monomer. Requires Zn(2+) as cofactor.

The enzyme catalyses Hydrolysis of DNA containing ring-opened 7-methylguanine residues, releasing 2,6-diamino-4-hydroxy-5-(N-methyl)formamidopyrimidine.. It carries out the reaction 2'-deoxyribonucleotide-(2'-deoxyribose 5'-phosphate)-2'-deoxyribonucleotide-DNA = a 3'-end 2'-deoxyribonucleotide-(2,3-dehydro-2,3-deoxyribose 5'-phosphate)-DNA + a 5'-end 5'-phospho-2'-deoxyribonucleoside-DNA + H(+). In terms of biological role, involved in base excision repair of DNA damaged by oxidation or by mutagenic agents. Acts as a DNA glycosylase that recognizes and removes damaged bases. Has a preference for oxidized purines, such as 7,8-dihydro-8-oxoguanine (8-oxoG). Has AP (apurinic/apyrimidinic) lyase activity and introduces nicks in the DNA strand. Cleaves the DNA backbone by beta-delta elimination to generate a single-strand break at the site of the removed base with both 3'- and 5'-phosphates. This Bordetella parapertussis (strain 12822 / ATCC BAA-587 / NCTC 13253) protein is Formamidopyrimidine-DNA glycosylase.